An 879-amino-acid chain; its full sequence is MEKMGLNEIRSKFLEFFESKGHYVANSYSLVPNNDKSLLLINSGMAPLKNYFSGVEVPPSVRMCTSQKCIRTGDIENVGITARHATFFEMMGNFSFGDYFKRESIKWGWEFVTEWLNIPEDKIWVTVYEEDDDSYDIWAKEMNFPEERMVRLGKDDNFWEIGTGPCGPCSEIYFDRGEEYGCDNPDCKPGCDCDRYLEFWNHVFTQFDRDEEGNYSLLENKNIDTGMGLERMGCIMQGVDTIFEVDTIKSILEAVEKLTGVKYGENPKNDISIRIITDHIRAVTFLVSDGVLPSNEGRGYVLRRLLRRAARHGKLLGVKELFLQKLIDEVIKVNDKAYPVLVEKESYIKKVVGIEEEKFNETIDQGTEILNSYIEVLKNEGKTVLSGQEAFKLYDTYGFPIDLTKEILEEEHLSVDEEAFNEEMEKQKERARNARGNMDGESWKEDPLSKLESTVDSTFNGYSEIYGEGTIEAIVKDDELVQSAEEGDKVSIVLDNTTFYPEGGGQVGDCGLITNENLVLEVLNTKKGANNSIKHIGIIKSGRISNGDKVKTLVDRETRMSAARNHSATHLLHKALREVLGEHVNQAGSLVTPERLRFDITHFEAISNEELKVIEEKVNNVILSSLDIKCDIMNIKEAKEKGATALFGEKYGDEVRVVSMGDYSTELCGGTHLTNTSQVGMFKILSEGGVAAGVRRIEAITGKAVYEYLKERDGIISEVCVNLKSKEDNLIQRISSLLEENKNLSKELHDMKAKMSLQSVDSIFDSKVEVNGVNLITNKFEGMDMDTLRETADNLRDKLGSGVVVLANVVDDKVNFVVTATKDVLDKGIHSGNIVREVAKIAGGKGGGRPNMAQAGASDVSKVDQALSYASEVIKTQVK.

The segment at 426-449 (KQKERARNARGNMDGESWKEDPLS) is disordered. The Zn(2+) site is built by His566, His570, Cys668, and His672.

This sequence belongs to the class-II aminoacyl-tRNA synthetase family. Requires Zn(2+) as cofactor.

The protein localises to the cytoplasm. It catalyses the reaction tRNA(Ala) + L-alanine + ATP = L-alanyl-tRNA(Ala) + AMP + diphosphate. Its function is as follows. Catalyzes the attachment of alanine to tRNA(Ala) in a two-step reaction: alanine is first activated by ATP to form Ala-AMP and then transferred to the acceptor end of tRNA(Ala). Also edits incorrectly charged Ser-tRNA(Ala) and Gly-tRNA(Ala) via its editing domain. The polypeptide is Alanine--tRNA ligase (Clostridioides difficile (strain 630) (Peptoclostridium difficile)).